The sequence spans 204 residues: Thiamine-phosphate synthase (204 aa).

Residues 35–39 (QVREK) and N67 contribute to the 4-amino-2-methyl-5-(diphosphooxymethyl)pyrimidine site. Mg(2+) contacts are provided by D68 and D87. Residue S106 participates in 4-amino-2-methyl-5-(diphosphooxymethyl)pyrimidine binding. 2-[(2R,5Z)-2-carboxy-4-methylthiazol-5(2H)-ylidene]ethyl phosphate is bound at residue 132-134 (TPT). K135 is a 4-amino-2-methyl-5-(diphosphooxymethyl)pyrimidine binding site. 2-[(2R,5Z)-2-carboxy-4-methylthiazol-5(2H)-ylidene]ethyl phosphate-binding positions include G163 and 183-184 (VS).

This sequence belongs to the thiamine-phosphate synthase family. It depends on Mg(2+) as a cofactor.

It catalyses the reaction 2-[(2R,5Z)-2-carboxy-4-methylthiazol-5(2H)-ylidene]ethyl phosphate + 4-amino-2-methyl-5-(diphosphooxymethyl)pyrimidine + 2 H(+) = thiamine phosphate + CO2 + diphosphate. The catalysed reaction is 2-(2-carboxy-4-methylthiazol-5-yl)ethyl phosphate + 4-amino-2-methyl-5-(diphosphooxymethyl)pyrimidine + 2 H(+) = thiamine phosphate + CO2 + diphosphate. The enzyme catalyses 4-methyl-5-(2-phosphooxyethyl)-thiazole + 4-amino-2-methyl-5-(diphosphooxymethyl)pyrimidine + H(+) = thiamine phosphate + diphosphate. It functions in the pathway cofactor biosynthesis; thiamine diphosphate biosynthesis; thiamine phosphate from 4-amino-2-methyl-5-diphosphomethylpyrimidine and 4-methyl-5-(2-phosphoethyl)-thiazole: step 1/1. Condenses 4-methyl-5-(beta-hydroxyethyl)thiazole monophosphate (THZ-P) and 2-methyl-4-amino-5-hydroxymethyl pyrimidine pyrophosphate (HMP-PP) to form thiamine monophosphate (TMP). The chain is Thiamine-phosphate synthase from Vibrio parahaemolyticus serotype O3:K6 (strain RIMD 2210633).